The sequence spans 342 residues: Holliday junction branch migration complex subunit RuvB (342 aa).

The large ATPase domain (RuvB-L) stretch occupies residues 1–184 (MEENFDIREQ…FGINLHLEYY (184 aa)). ATP is bound by residues L23, R24, G65, K68, T69, T70, 131–133 (EDY), R174, Y184, and R221. T69 contributes to the Mg(2+) binding site. The interval 185 to 255 (DDDVLTSIIR…IARFALEALN (71 aa)) is small ATPAse domain (RuvB-S). Residues 258–342 (RYGLDEIDNK…YNSQKTLFDD (85 aa)) are head domain (RuvB-H). DNA is bound by residues R313 and R318.

Belongs to the RuvB family. As to quaternary structure, homohexamer. Forms an RuvA(8)-RuvB(12)-Holliday junction (HJ) complex. HJ DNA is sandwiched between 2 RuvA tetramers; dsDNA enters through RuvA and exits via RuvB. An RuvB hexamer assembles on each DNA strand where it exits the tetramer. Each RuvB hexamer is contacted by two RuvA subunits (via domain III) on 2 adjacent RuvB subunits; this complex drives branch migration. In the full resolvosome a probable DNA-RuvA(4)-RuvB(12)-RuvC(2) complex forms which resolves the HJ.

It localises to the cytoplasm. It carries out the reaction ATP + H2O = ADP + phosphate + H(+). The RuvA-RuvB-RuvC complex processes Holliday junction (HJ) DNA during genetic recombination and DNA repair, while the RuvA-RuvB complex plays an important role in the rescue of blocked DNA replication forks via replication fork reversal (RFR). RuvA specifically binds to HJ cruciform DNA, conferring on it an open structure. The RuvB hexamer acts as an ATP-dependent pump, pulling dsDNA into and through the RuvAB complex. RuvB forms 2 homohexamers on either side of HJ DNA bound by 1 or 2 RuvA tetramers; 4 subunits per hexamer contact DNA at a time. Coordinated motions by a converter formed by DNA-disengaged RuvB subunits stimulates ATP hydrolysis and nucleotide exchange. Immobilization of the converter enables RuvB to convert the ATP-contained energy into a lever motion, pulling 2 nucleotides of DNA out of the RuvA tetramer per ATP hydrolyzed, thus driving DNA branch migration. The RuvB motors rotate together with the DNA substrate, which together with the progressing nucleotide cycle form the mechanistic basis for DNA recombination by continuous HJ branch migration. Branch migration allows RuvC to scan DNA until it finds its consensus sequence, where it cleaves and resolves cruciform DNA. In Phocaeicola vulgatus (strain ATCC 8482 / DSM 1447 / JCM 5826 / CCUG 4940 / NBRC 14291 / NCTC 11154) (Bacteroides vulgatus), this protein is Holliday junction branch migration complex subunit RuvB.